The chain runs to 245 residues: uncharacterized protein (245 aa).

An N-terminal signal peptide occupies residues 1–18 (MKSAAILALLAQALAVTA). A disordered region spans residues 21–66 (VEGDRTPGTRTLDLPNFPGGSVPTRGVEKRADLPPDNGGGNAPDPD). N-linked (GlcNAc...) asparagine glycans are attached at residues Asn189 and Asn225.

Its subcellular location is the secreted. This is an uncharacterized protein from Arthroderma benhamiae (strain ATCC MYA-4681 / CBS 112371) (Trichophyton mentagrophytes).